The following is a 359-amino-acid chain: Queuine tRNA-ribosyltransferase (359 aa).

Asp-92 serves as the catalytic Proton acceptor. Residues 92–96, Asp-146, Gln-189, and Gly-216 each bind substrate; that span reads DSGGF. Residues 245–251 are RNA binding; that stretch reads GVGKPAD. Catalysis depends on Asp-264, which acts as the Nucleophile. The tract at residues 269-273 is RNA binding; important for wobble base 34 recognition; it reads TRSGR. Cys-302, Cys-304, Cys-307, and His-333 together coordinate Zn(2+).

This sequence belongs to the queuine tRNA-ribosyltransferase family. In terms of assembly, homodimer. Within each dimer, one monomer is responsible for RNA recognition and catalysis, while the other monomer binds to the replacement base PreQ1. The cofactor is Zn(2+).

The enzyme catalyses 7-aminomethyl-7-carbaguanine + guanosine(34) in tRNA = 7-aminomethyl-7-carbaguanosine(34) in tRNA + guanine. It functions in the pathway tRNA modification; tRNA-queuosine biosynthesis. Catalyzes the base-exchange of a guanine (G) residue with the queuine precursor 7-aminomethyl-7-deazaguanine (PreQ1) at position 34 (anticodon wobble position) in tRNAs with GU(N) anticodons (tRNA-Asp, -Asn, -His and -Tyr). Catalysis occurs through a double-displacement mechanism. The nucleophile active site attacks the C1' of nucleotide 34 to detach the guanine base from the RNA, forming a covalent enzyme-RNA intermediate. The proton acceptor active site deprotonates the incoming PreQ1, allowing a nucleophilic attack on the C1' of the ribose to form the product. After dissociation, two additional enzymatic reactions on the tRNA convert PreQ1 to queuine (Q), resulting in the hypermodified nucleoside queuosine (7-(((4,5-cis-dihydroxy-2-cyclopenten-1-yl)amino)methyl)-7-deazaguanosine). This chain is Queuine tRNA-ribosyltransferase, found in Rickettsia bellii (strain RML369-C).